A 435-amino-acid chain; its full sequence is Histone acetyltransferase type B subunit 2 (435 aa).

5 WD repeats span residues 135 to 175 (NHAG…SKAP), 188 to 228 (GQTK…KQDP), 238 to 278 (GHSA…TAKA), 284 to 324 (GHNA…TKHH), and 328 to 368 (AHTN…AEQT). The interval 370–374 (DDAED) is interaction with the histone H4 N-terminus. A WD 6 repeat occupies 385–425 (GHTSKVCDISWSPSSPWTIASASEDNILQVWEPSRHLRTPY).

The protein belongs to the WD repeat RBAP46/RBAP48/MSI1 family. In terms of assembly, component of the HAT-B complex composed of at least HAT1 and HAT2. The HAT-B complex binds to histone H4 tail.

The protein localises to the cytoplasm. Its subcellular location is the nucleus. In terms of biological role, regulatory subunit of the histone acetylase B (HAT-B) complex. The complex acetylates 'Lys-12' of histone H4 which is required for telomeric silencing. The chain is Histone acetyltransferase type B subunit 2 (HAT2) from Cryptococcus neoformans var. neoformans serotype D (strain B-3501A) (Filobasidiella neoformans).